A 490-amino-acid chain; its full sequence is Cytochrome P450 71A22 (490 aa).

A helical membrane pass occupies residues 2–22 (ESMIRIILLSLIIFITILFFI). Cysteine 432 contributes to the heme binding site.

It belongs to the cytochrome P450 family. Heme serves as cofactor.

The protein resides in the membrane. This Arabidopsis thaliana (Mouse-ear cress) protein is Cytochrome P450 71A22 (CYP71A22).